The primary structure comprises 314 residues: ATP synthase gamma chain (314 aa).

The protein belongs to the ATPase gamma chain family. In terms of assembly, F-type ATPases have 2 components, CF(1) - the catalytic core - and CF(0) - the membrane proton channel. CF(1) has five subunits: alpha(3), beta(3), gamma(1), delta(1), epsilon(1). CF(0) has three main subunits: a, b and c.

It is found in the cellular thylakoid membrane. Functionally, produces ATP from ADP in the presence of a proton gradient across the membrane. The gamma chain is believed to be important in regulating ATPase activity and the flow of protons through the CF(0) complex. The polypeptide is ATP synthase gamma chain (Gloeothece citriformis (strain PCC 7424) (Cyanothece sp. (strain PCC 7424))).